A 177-amino-acid polypeptide reads, in one-letter code: Coatomer subunit zeta-1 (177 aa).

An N-acetylmethionine modification is found at M1.

This sequence belongs to the adaptor complexes small subunit family. In terms of assembly, oligomeric complex that consists of at least the alpha, beta, beta', gamma, delta, epsilon and zeta subunits.

The protein localises to the cytoplasm. It localises to the golgi apparatus membrane. The protein resides in the cytoplasmic vesicle. Its subcellular location is the COPI-coated vesicle membrane. The coatomer is a cytosolic protein complex that binds to dilysine motifs and reversibly associates with Golgi non-clathrin-coated vesicles, which further mediate biosynthetic protein transport from the ER, via the Golgi up to the trans Golgi network. Coatomer complex is required for budding from Golgi membranes, and is essential for the retrograde Golgi-to-ER transport of dilysine-tagged proteins. The zeta subunit may be involved in regulating the coat assembly and, hence, the rate of biosynthetic protein transport due to its association-dissociation properties with the coatomer complex. In Homo sapiens (Human), this protein is Coatomer subunit zeta-1 (COPZ1).